Reading from the N-terminus, the 144-residue chain is Bradykinin-potentiating and C-type natriuretic peptides isoform 2 (144 aa).

A signal peptide spans 1–23 (MVLSRLAASGLLLLALLALSVDG). The propeptide occupies 24–30 (KPVQQWA). Gln-31 is subject to Pyrrolidone carboxylic acid. Positions 41–47 (LLVQQWA) are excised as a propeptide. At Gln-48 the chain carries Pyrrolidone carboxylic acid. Residues 61–67 (LTVQQWA) constitute a propeptide that is removed on maturation. Gln-68 bears the Pyrrolidone carboxylic acid mark. The propeptide occupies 78-84 (LTVQQWA). Residues 81–110 (QQWAQGRPPGPPIPPLTVQQWAQARPPHPP) form a disordered region. Position 85 is a pyrrolidone carboxylic acid (Gln-85). Residues 96 to 102 (LTVQQWA) constitute a propeptide that is removed on maturation. Pyrrolidone carboxylic acid is present on Gln-103. The propeptide occupies 114 to 116 (APL). Gln-117 bears the Pyrrolidone carboxylic acid mark. Val-122 is a propeptide. Position 123 is a pyrrolidone carboxylic acid (Gln-123). A propeptide spanning residues 128 to 144 (VQKWAPVQKWAPLLQPT) is cleaved from the precursor.

The protein in the N-terminal section; belongs to the bradykinin-potentiating peptide family. In terms of tissue distribution, expressed by venom gland.

It localises to the secreted. The protein resides in the cytoplasm. Its subcellular location is the cytosol. Peptide with several activities. It inhibits the activity of the angiotensin-converting enzyme (ACE) by a preferential interaction with its C-domain. It evokes transient hypotension (-14 mmHg) similar to that evoked by 0.5 ug of bradykinin, when injected alone into rats. It has a high bradykinin-potentiating effect (120%), when 60 nmol of BPP-10c are coinjected with 0.5 ug of bradykinin into rats. Does not affect angiotensin-1 pressor effects. Shows potent and long-lasting antihypertensive activity as well as a reduction of the heart rate. It also binds and dose-dependently promotes the activation of cytosolic argininosuccinate synthase (ASS1), an enzyme that catalyzes the conversion of citrulline, L-aspartate and ATP to argininosuccinate, AMP and pyrophosphate. It also enhances ASS1-dependent arginine production in HEK 293 cells, as well as in spontaneous hypertensive rat (SHR) and Wistar rat plasma. In addition, it induces the production of nitric-oxide (NO) by HUVEC cells via the endothelial nitric-oxide synthase (NOS3), which use arginine as a substrate and produce NO. It has been shown to be internalized by ASS1-expressing endothelial (HUVEC) and kidney (HEK 293) cells, and is detected homogenously distributed within the cell cytoplasm for up to 2 hours. Its function is as follows. Acts as indirect hypotensive agent. Increases leukocyte rolling flux and adhesion by five-fold in post-capillary venules, without any increments in vasodilation of arterioles. In terms of biological role, acts as indirect hypotensive agent. Potently induces vasodilation of arterioles, with only a small increase in leukocyte rolling flux. The polypeptide is Bradykinin-potentiating and C-type natriuretic peptides isoform 2 (Bothrops jararacussu (Jararacussu)).